Reading from the N-terminus, the 447-residue chain is Ion-translocating oxidoreductase complex subunit C (447 aa).

4Fe-4S ferredoxin-type domains follow at residues 359–389 (AEVLRDEATVCIHCARCVDVCPMNLLPGRIA) and 399–430 (RCREYFALNCIECGECAVVCPAKRHLVQLIRY). [4Fe-4S] cluster-binding residues include Cys369, Cys372, Cys375, Cys379, Cys408, Cys411, Cys414, and Cys418.

This sequence belongs to the 4Fe4S bacterial-type ferredoxin family. RnfC subfamily. As to quaternary structure, the Rnf complex is probably composed of eight subunits, including RnfA, RnfB, RnfC, RnfD, RnfE and RnfG. [4Fe-4S] cluster is required as a cofactor.

The protein resides in the cell membrane. Part of a membrane-bound complex that couples electron transfer with translocation of ions across the membrane. Catalyzes Na(+) transport, most probably coupled to electron transfer from reduced ferredoxin to methanophenazine and heterodisulfide reductase. Involved in heterodisulfide reduction during methanogenesis from acetate. The protein is Ion-translocating oxidoreductase complex subunit C of Methanosarcina acetivorans (strain ATCC 35395 / DSM 2834 / JCM 12185 / C2A).